We begin with the raw amino-acid sequence, 226 residues long: Leucyl/phenylalanyl-tRNA--protein transferase (226 aa).

It belongs to the L/F-transferase family.

The protein resides in the cytoplasm. The enzyme catalyses N-terminal L-lysyl-[protein] + L-leucyl-tRNA(Leu) = N-terminal L-leucyl-L-lysyl-[protein] + tRNA(Leu) + H(+). The catalysed reaction is N-terminal L-arginyl-[protein] + L-leucyl-tRNA(Leu) = N-terminal L-leucyl-L-arginyl-[protein] + tRNA(Leu) + H(+). It carries out the reaction L-phenylalanyl-tRNA(Phe) + an N-terminal L-alpha-aminoacyl-[protein] = an N-terminal L-phenylalanyl-L-alpha-aminoacyl-[protein] + tRNA(Phe). Functionally, functions in the N-end rule pathway of protein degradation where it conjugates Leu, Phe and, less efficiently, Met from aminoacyl-tRNAs to the N-termini of proteins containing an N-terminal arginine or lysine. In Bradyrhizobium sp. (strain ORS 278), this protein is Leucyl/phenylalanyl-tRNA--protein transferase.